Here is a 322-residue protein sequence, read N- to C-terminus: Arginase-1 (322 aa).

The interval 1-27 (MSFKSQSIGIIGAPFSKGQPRGGVEEG) is disordered. Residue Ser7 is modified to Phosphoserine. Lys17 is subject to N6-succinyllysine. Position 72 is a phosphoserine (Ser72). Lys75 is subject to N6-succinyllysine. Residues His101, Asp124, His126, and Asp128 each contribute to the Mn(2+) site. Substrate contacts are provided by residues 126 to 130 (HTDIN) and 137 to 139 (TGN). Ser163 carries the phosphoserine modification. Asp183 lines the substrate pocket. Ser217 is modified (phosphoserine). Asp232 and Asp234 together coordinate Mn(2+). Residues Thr246 and Glu277 each coordinate substrate.

It belongs to the arginase family. Homotrimer. Interacts with CMTM6. Mn(2+) serves as cofactor.

Its subcellular location is the cytoplasm. The enzyme catalyses L-arginine + H2O = urea + L-ornithine. The protein operates within nitrogen metabolism; urea cycle; L-ornithine and urea from L-arginine: step 1/1. In Sus scrofa (Pig), this protein is Arginase-1 (ARG1).